The sequence spans 135 residues: Small ribosomal subunit protein uS8 (135 aa).

It belongs to the universal ribosomal protein uS8 family. Part of the 30S ribosomal subunit. Contacts proteins S5 and S12.

One of the primary rRNA binding proteins, it binds directly to 16S rRNA central domain where it helps coordinate assembly of the platform of the 30S subunit. The chain is Small ribosomal subunit protein uS8 from Salinispora arenicola (strain CNS-205).